Here is a 388-residue protein sequence, read N- to C-terminus: Probable peptidoglycan glycosyltransferase FtsW (388 aa).

Residues 1-19 (MSAAAPKPRPAHRFHIDQT) are Cytoplasmic-facing. The chain crosses the membrane as a helical span at residues 20–40 (LLSVCLCLLGIGFVMVASSSM). Residues 41 to 57 (HLGVKMADDVSYYPFKQ) are Periplasmic-facing. Residues 58-78 (LVHIILGLMFAAAILAIPMKY) form a helical membrane-spanning segment. At 79 to 85 (WQKIGQP) the chain is on the cytoplasmic side. The helical transmembrane segment at 86–106 (LFIVGLVLLLVVLIPGVGVKV) threads the bilayer. Residues 107–117 (NGSTRWLSLLG) are Periplasmic-facing. Residues 118 to 137 (LRIQVSEVMKFISVVYMAGY) traverse the membrane as a helical segment. At 138–147 (ITRHSDHVRH) the chain is on the cytoplasmic side. A helical transmembrane segment spans residues 148–168 (SIFGLLRPLMLLSVASILLLL). Residues 169 to 170 (EP) lie on the Periplasmic side of the membrane. A helical transmembrane segment spans residues 171-191 (DFGSAVVILIIAMGMMFLGGA). Position 192 (Arg-192) is a topological domain, cytoplasmic. Residues 193–213 (LSPFVALVALISSAGAILASS) traverse the membrane as a helical segment. At 214–271 (ADYRVKRMTSFLNPWEHARDSGYQLTQALISFGRGEVSGVGLGNGLQKLFYLPEAHTD) the chain is on the periplasmic side. Residues 272-292 (FLFSVLGEELGLVGVTLVIAL) form a helical membrane-spanning segment. Topologically, residues 293 to 315 (FTTLVVRGFSIGEQAEAAGERFS) are cytoplasmic. Residues 316–336 (ALVAYGLVIWFGFQAFVNMGV) form a helical membrane-spanning segment. Residues 337 to 348 (NMGILPTKGLTL) lie on the Periplasmic side of the membrane. A helical membrane pass occupies residues 349 to 369 (PLMSYGGGSMIVMCGAMAVLF). The Cytoplasmic segment spans residues 370 to 388 (RIHYEVTELHKSNIKGKSR).

Belongs to the SEDS family. FtsW subfamily.

The protein localises to the cell inner membrane. It carries out the reaction [GlcNAc-(1-&gt;4)-Mur2Ac(oyl-L-Ala-gamma-D-Glu-L-Lys-D-Ala-D-Ala)](n)-di-trans,octa-cis-undecaprenyl diphosphate + beta-D-GlcNAc-(1-&gt;4)-Mur2Ac(oyl-L-Ala-gamma-D-Glu-L-Lys-D-Ala-D-Ala)-di-trans,octa-cis-undecaprenyl diphosphate = [GlcNAc-(1-&gt;4)-Mur2Ac(oyl-L-Ala-gamma-D-Glu-L-Lys-D-Ala-D-Ala)](n+1)-di-trans,octa-cis-undecaprenyl diphosphate + di-trans,octa-cis-undecaprenyl diphosphate + H(+). Its pathway is cell wall biogenesis; peptidoglycan biosynthesis. Its function is as follows. Peptidoglycan polymerase that is essential for cell division. The polypeptide is Probable peptidoglycan glycosyltransferase FtsW (Methylomonas methanica (strain DSM 25384 / MC09)).